A 426-amino-acid chain; its full sequence is C4-dicarboxylate transport protein (426 aa).

Transmembrane regions (helical) follow at residues 8–28 (VLYVQVIVAIIIGIALGHFYP), 44–64 (LIKMVIGPIIFCTVVTGIAGM), 78–98 (LLYFEIVSTFALILGLAATHL), 148–168 (GEILQILLIALLFGAVLAHVG), 184–204 (ILFGMVGIITKLAPIGAFGAM), 222–242 (LIGTFYLTSIVFVVVVLGFIA), 297–317 (GYSFNLDGTNIYMTMAVLFIA), and 355–375 (AATLAVVPTIPLSGMVLILGI).

The protein belongs to the dicarboxylate/amino acid:cation symporter (DAACS) (TC 2.A.23) family.

Its subcellular location is the cell inner membrane. Functionally, responsible for the transport of dicarboxylates such as succinate, fumarate, and malate from the periplasm across the membrane. This Paraburkholderia phymatum (strain DSM 17167 / CIP 108236 / LMG 21445 / STM815) (Burkholderia phymatum) protein is C4-dicarboxylate transport protein.